The following is a 249-amino-acid chain: 4-hydroxy-tetrahydrodipicolinate reductase (249 aa).

NAD(+) is bound by residues Asp-32, 74–76 (GTT), and 99–102 (SANY). The Proton donor/acceptor role is filled by His-134. (S)-2,3,4,5-tetrahydrodipicolinate is bound at residue His-135. Catalysis depends on Lys-138, which acts as the Proton donor. Residue 144–145 (GT) participates in (S)-2,3,4,5-tetrahydrodipicolinate binding.

The protein belongs to the DapB family.

Its subcellular location is the cytoplasm. The catalysed reaction is (S)-2,3,4,5-tetrahydrodipicolinate + NAD(+) + H2O = (2S,4S)-4-hydroxy-2,3,4,5-tetrahydrodipicolinate + NADH + H(+). It catalyses the reaction (S)-2,3,4,5-tetrahydrodipicolinate + NADP(+) + H2O = (2S,4S)-4-hydroxy-2,3,4,5-tetrahydrodipicolinate + NADPH + H(+). The protein operates within amino-acid biosynthesis; L-lysine biosynthesis via DAP pathway; (S)-tetrahydrodipicolinate from L-aspartate: step 4/4. In terms of biological role, catalyzes the conversion of 4-hydroxy-tetrahydrodipicolinate (HTPA) to tetrahydrodipicolinate. The polypeptide is 4-hydroxy-tetrahydrodipicolinate reductase (Chlorobaculum tepidum (strain ATCC 49652 / DSM 12025 / NBRC 103806 / TLS) (Chlorobium tepidum)).